Consider the following 21-residue polypeptide: Major outer membrane protein (21 aa).

As to quaternary structure, disulfide bond interactions within and between MOMP molecules and other components form high molecular-weight oligomers.

Its subcellular location is the cell outer membrane. Structural rigidity of the outer membrane of elementary bodies and porin forming, permitting diffusion of solutes through the intracellular reticulate body membrane. The protein is Major outer membrane protein of Actinobacillus suis.